We begin with the raw amino-acid sequence, 361 residues long: Transcription factor TCP10 (361 aa).

The region spanning 29-87 is the TCP domain; sequence RKDRHSKVFTSKGPRDRRVRLSAHTAIQFYDVQDRLGYDRPSKAVDWLIKKAKTAIDKL. 2 disordered regions span residues 220–259 and 295–317; these read DLTM…QPSM and SWDH…SMFA. Positions 295–304 are enriched in basic and acidic residues; that stretch reads SWDHHQTTSD.

As to quaternary structure, interacts with AHP1, AHP2 and AHP3. Interacts with SPL. In terms of tissue distribution, mostly detected in lateral organs, such as leaves and flowers. Expressed in cotyledons, particularly in the vascular region, in leaves, roots, stems, buds, flowers and immature siliques.

The protein localises to the nucleus. Plays a pivotal role in the control of morphogenesis of shoot organs by negatively regulating the expression of boundary-specific genes such as CUC genes, probably through the induction of miRNA (e.g. miR164). Participates in ovule development. This is Transcription factor TCP10 (TCP10) from Arabidopsis thaliana (Mouse-ear cress).